The chain runs to 448 residues: Tubby-like F-box protein 3 (448 aa).

Positions 56–102 (ESRWASLPPELLREVIRRLEADESTWPSRRNVVCFAAVCRTWREMCK) constitute an F-box domain. A compositionally biased stretch (pro residues) spans 387-403 (PSPPPAGAPTPSQPGPA). Positions 387–406 (PSPPPAGAPTPSQPGPADPE) are disordered.

It belongs to the TUB family. In terms of tissue distribution, expressed in roots, leaves, flowers and seeds.

The protein is Tubby-like F-box protein 3 (TULP3) of Oryza sativa subsp. japonica (Rice).